A 477-amino-acid chain; its full sequence is MKVTLPEFERAGVMVVGDVMLDRYWYGPTSRISPEAPVPVVKVNTIEERPGGAANVAMNIASLGANARLVGLTGIDDAARALSKSLADVNVKCDFVSVPTHPTITKLRVLSRNQQLIRLDFEEGFEGVDPQPLHERINQALSSIGALVLSDYAKGALASVQQMIQLARKAGVPVLIDPKGTDFERYRGATLLTPNLSEFEAVVGKCKTEEEIVERGMKLIADYELSALLVTRSEQGMSLLQPGKTPLHMPTQAQEVYDVTGAGDTVIGVLAATLAAGNSLEEACFFANAAAGVVVGKLGTSTVSPIELENAVRGRADTGFGVMTEEELKLAVAAARKRGEKVVMTNGVFDILHAGHVSYLANARKLGDRLIVAVNSDASTKRLKGDSRPVNPLEQRMIVLGALEAVDWVVSFEEDTPQRLIAGILPDLLVKGGDYKPEEIAGSKEVWANGGEVLVLNFEDGCSTTNIIKKIQQDKKG.

The interval 1–318 is ribokinase; sequence MKVTLPEFER…ENAVRGRADT (318 aa). At Lys-179 the chain carries N6-acetyllysine. 195 to 198 serves as a coordination point for ATP; that stretch reads NLSE. Residue Asp-264 is part of the active site. A cytidylyltransferase region spans residues 344–477; the sequence is MTNGVFDILH…IKKIQQDKKG (134 aa).

In the N-terminal section; belongs to the carbohydrate kinase PfkB family. It in the C-terminal section; belongs to the cytidylyltransferase family. As to quaternary structure, homodimer.

It catalyses the reaction D-glycero-beta-D-manno-heptose 7-phosphate + ATP = D-glycero-beta-D-manno-heptose 1,7-bisphosphate + ADP + H(+). The catalysed reaction is D-glycero-beta-D-manno-heptose 1-phosphate + ATP + H(+) = ADP-D-glycero-beta-D-manno-heptose + diphosphate. The protein operates within nucleotide-sugar biosynthesis; ADP-L-glycero-beta-D-manno-heptose biosynthesis; ADP-L-glycero-beta-D-manno-heptose from D-glycero-beta-D-manno-heptose 7-phosphate: step 1/4. It participates in nucleotide-sugar biosynthesis; ADP-L-glycero-beta-D-manno-heptose biosynthesis; ADP-L-glycero-beta-D-manno-heptose from D-glycero-beta-D-manno-heptose 7-phosphate: step 3/4. Catalyzes the phosphorylation of D-glycero-D-manno-heptose 7-phosphate at the C-1 position to selectively form D-glycero-beta-D-manno-heptose-1,7-bisphosphate. Its function is as follows. Catalyzes the ADP transfer from ATP to D-glycero-beta-D-manno-heptose 1-phosphate, yielding ADP-D-glycero-beta-D-manno-heptose. This Escherichia coli O17:K52:H18 (strain UMN026 / ExPEC) protein is Bifunctional protein HldE.